A 1231-amino-acid chain; its full sequence is MKVRLLRQLSAAAKAKAPSGLQGPPQAHHFVSLLLEEYAALCQAARSISTFLGTLENEHLKKFQVTWELHNKHLFENLVFSEPLLQSNLPALVSQIRLGTTTHDTCTEDMYSTLLQRYQRSEEELRKVAEEWLECQKRIDAYVDEQMTMKTKQRMLTEDWEIFKQRRLIEEQLTNKKVVTGENNFTDTRRHMLSSRLSMPDCPNCNYRRRCACDDCSLSHILTCGIMDTPVTDDIHIHQLPLQVDSAPDYLSEMRPPSVSSASSGSGSSSPITIQQHPRLILTDNGSAPTFCSDDEDVAPLSAKFADIYPLTNYDDTNVVANMNGIHSELNGGGENMALKDESPQVSSTSRSSSEADDEDADGESSGEPPGAPKQEEAIGNGNPKTEESNVNTPPPSYPAQQAEQTPNTCECHVCKQEASGLPASAMTAGALPPGHQFLSPEKPTHPALHLYPHIHGHVPLHTVPHLPRPLIHPTLYPAPPFTHSKALPPAPVQSHTNKPQAFNASLQDHIYPSCFGNTPDWNSSKFISLWESEMMNDKNWNPGTFLPDTISGNDILGPVLSETRPEALPPPPSNEAPAVSDIKEKKNAAKKKCLYNFQDAFMEANEVAMANTVAMATSSATSSVSCTATTVQSSSSQFKVSSRRPPSIGDVFHGLNKEDHRHSAPAAPRNSPTGLAPLPALSPSALSPASTPHLPNLAAPSFPKTATTAPGFVDTRKSFCPTPVAPPPSTTDGSISAPPSVCSDPDCEGHRCENGVYDPQQDDGDESADEDSCSEHSSSTSTSTNQKEGKYCDCCYCEFFGHGGPPAAPTSRNYAEMREKLRLRLTKRKEEQPKKMEQISEREGVVDHRRVEDLLQFINSSEAKPVSSSRAAKRARHKQRKLEEKARLEAEARAREHLHHQEEQKQREEEEDEEEEDEEQHFKEEFQRLQELQKLRAAKKKKKDRPSKDCSKLDMLARNFQAATESISNSENIHNGSLEQTEEPETSSHSPSRHMNHSEPRPGPGANGDATDPVDPRDPSKLLLPKEVNGKQHEPLAFLLDMMHHHKEGNSKQKLKQTSKTSNEPARKPTEPPKTTEVQLKPRAQPELKPKVVDLALLTEQKREERKTNSNNNNKKQLSHIKEEKLSTVTPEPPSPSQLLQNGRLILASSPQPKGKNKKNKKKKGDRTSSSLDDVFLPKDIDLDSVDMDETEREVEYFKRFCLDSARQNRQRLSINWSNFSLKKATFAAH.

Residues 106 to 142 (CTEDMYSTLLQRYQRSEEELRKVAEEWLECQKRIDAY) are a coiled coil. The tract at residues 249-272 (DYLSEMRPPSVSSASSGSGSSSPI) is disordered. Positions 258–270 (SVSSASSGSGSSS) are enriched in low complexity. Residue Ser293 is modified to Phosphoserine. Disordered regions lie at residues 331–405 (NGGG…QAEQ), 633–703 (QSSS…APSF), 719–789 (SFCP…NQKE), 826–845 (LTKR…EREG), and 860–1174 (NSSE…SSLD). The segment covering 355–365 (EADDEDADGES) has biased composition (acidic residues). Ser648 carries the phosphoserine modification. Positions 676–691 (LAPLPALSPSALSPAS) are enriched in low complexity. Over residues 761 to 773 (QQDDGDESADEDS) the composition is skewed to acidic residues. Residues 776–785 (EHSSSTSTST) are compositionally biased toward low complexity. Residues 872 to 881 (AAKRARHKQR) are compositionally biased toward basic residues. The stretch at 877 to 973 (RHKQRKLEEK…ATESISNSEN (97 aa)) forms a coiled coil. A compositionally biased stretch (basic and acidic residues) spans 882-909 (KLEEKARLEAEARAREHLHHQEEQKQRE). The span at 910–920 (EEEDEEEEDEE) shows a compositional bias: acidic residues. The segment covering 921–935 (QHFKEEFQRLQELQK) has biased composition (basic and acidic residues). The span at 937–946 (RAAKKKKKDR) shows a compositional bias: basic residues. Positions 962-979 (QAATESISNSENIHNGSL) are enriched in polar residues. Residues Ser1136 and Ser1151 each carry the phosphoserine modification. Residues 1156–1166 (GKNKKNKKKKG) are compositionally biased toward basic residues.

Belongs to the FAM193 family.

This Mus musculus (Mouse) protein is Protein FAM193A (Fam193a).